We begin with the raw amino-acid sequence, 225 residues long: UPF0758 protein Shewmr4_3597 (225 aa).

Residues 102-224 (VLTNPDLTRD…IVSFAERGWI (123 aa)) form the MPN domain. 3 residues coordinate Zn(2+): His-173, His-175, and Asp-186. The JAMM motif motif lies at 173 to 186 (HNHPSGIAEPSQAD).

Belongs to the UPF0758 family.

The chain is UPF0758 protein Shewmr4_3597 from Shewanella sp. (strain MR-4).